We begin with the raw amino-acid sequence, 671 residues long: DNA ligase (671 aa).

NAD(+)-binding positions include 32–36 (DAEYD), 81–82 (SL), and Glu-113. Catalysis depends on Lys-115, which acts as the N6-AMP-lysine intermediate. Arg-136, Glu-173, Lys-290, and Lys-314 together coordinate NAD(+). Zn(2+) contacts are provided by Cys-408, Cys-411, Cys-426, and Cys-432. One can recognise a BRCT domain in the interval 593–671 (EIDSPFAGKT…EAEMIRLLGA (79 aa)).

The protein belongs to the NAD-dependent DNA ligase family. LigA subfamily. The cofactor is Mg(2+). Mn(2+) serves as cofactor.

The catalysed reaction is NAD(+) + (deoxyribonucleotide)n-3'-hydroxyl + 5'-phospho-(deoxyribonucleotide)m = (deoxyribonucleotide)n+m + AMP + beta-nicotinamide D-nucleotide.. In terms of biological role, DNA ligase that catalyzes the formation of phosphodiester linkages between 5'-phosphoryl and 3'-hydroxyl groups in double-stranded DNA using NAD as a coenzyme and as the energy source for the reaction. It is essential for DNA replication and repair of damaged DNA. The protein is DNA ligase of Salmonella typhi.